The chain runs to 332 residues: Phosphate acyltransferase (332 aa).

It belongs to the PlsX family. In terms of assembly, homodimer. Probably interacts with PlsY.

It localises to the cytoplasm. The enzyme catalyses a fatty acyl-[ACP] + phosphate = an acyl phosphate + holo-[ACP]. It participates in lipid metabolism; phospholipid metabolism. In terms of biological role, catalyzes the reversible formation of acyl-phosphate (acyl-PO(4)) from acyl-[acyl-carrier-protein] (acyl-ACP). This enzyme utilizes acyl-ACP as fatty acyl donor, but not acyl-CoA. In Sulfurimonas denitrificans (strain ATCC 33889 / DSM 1251) (Thiomicrospira denitrificans (strain ATCC 33889 / DSM 1251)), this protein is Phosphate acyltransferase.